The sequence spans 336 residues: DNA-directed RNA polymerase subunit alpha (336 aa).

Residues methionine 1–aspartate 232 are alpha N-terminal domain (alpha-NTD). The tract at residues phenylalanine 248–tyrosine 336 is alpha C-terminal domain (alpha-CTD).

This sequence belongs to the RNA polymerase alpha chain family. Homodimer. The RNAP catalytic core consists of 2 alpha, 1 beta, 1 beta' and 1 omega subunit. When a sigma factor is associated with the core the holoenzyme is formed, which can initiate transcription.

It catalyses the reaction RNA(n) + a ribonucleoside 5'-triphosphate = RNA(n+1) + diphosphate. Its function is as follows. DNA-dependent RNA polymerase catalyzes the transcription of DNA into RNA using the four ribonucleoside triphosphates as substrates. This chain is DNA-directed RNA polymerase subunit alpha, found in Sinorhizobium fredii (strain NBRC 101917 / NGR234).